A 216-amino-acid polypeptide reads, in one-letter code: MOB kinase activator 3C (216 aa).

The Zn(2+) site is built by Cys82, Cys87, His164, and His169.

It belongs to the MOB1/phocein family.

May regulate the activity of kinases. This is MOB kinase activator 3C (MOB3C) from Homo sapiens (Human).